The primary structure comprises 846 residues: Sucrose synthase 6 (846 aa).

Residues C276–T755 form a GT-B glycosyltransferase region.

This sequence belongs to the glycosyltransferase 1 family. Plant sucrose synthase subfamily.

The enzyme catalyses an NDP-alpha-D-glucose + D-fructose = a ribonucleoside 5'-diphosphate + sucrose + H(+). In terms of biological role, sucrose-cleaving enzyme that provides UDP-glucose and fructose for various metabolic pathways. This is Sucrose synthase 6 (SUS6) from Oryza sativa subsp. japonica (Rice).